A 701-amino-acid polypeptide reads, in one-letter code: Translation initiation factor IF-2 (701 aa).

Over residues 48-62 (KIYKPEKAEQSEKSQ) the composition is skewed to basic and acidic residues. Residues 48–123 (KIYKPEKAEQ…EPKEMPSKIT (76 aa)) form a disordered region. 2 stretches are compositionally biased toward low complexity: residues 63 to 89 (QKNTQNKQQTTHNKGNQSNKGNQNNKP) and 97 to 109 (NNKNNKNNKNNKQ). Over residues 110 to 119 (PKQEEPKEMP) the composition is skewed to basic and acidic residues. Residues 203-372 (ERPAVVTIMG…VLTSEVQELK (170 aa)) form the tr-type G domain. A G1 region spans residues 212-219 (GHVDHGKT). 212–219 (GHVDHGKT) serves as a coordination point for GTP. The segment at 237 to 241 (GITQH) is G2. The G3 stretch occupies residues 258–261 (DTPG). GTP-binding positions include 258 to 262 (DTPGH) and 312 to 315 (NKID). Residues 312-315 (NKID) are G4. Residues 348–350 (SAL) are G5.

Belongs to the TRAFAC class translation factor GTPase superfamily. Classic translation factor GTPase family. IF-2 subfamily.

It localises to the cytoplasm. In terms of biological role, one of the essential components for the initiation of protein synthesis. Protects formylmethionyl-tRNA from spontaneous hydrolysis and promotes its binding to the 30S ribosomal subunits. Also involved in the hydrolysis of GTP during the formation of the 70S ribosomal complex. The chain is Translation initiation factor IF-2 from Staphylococcus saprophyticus subsp. saprophyticus (strain ATCC 15305 / DSM 20229 / NCIMB 8711 / NCTC 7292 / S-41).